The sequence spans 295 residues: Probable endonuclease 4 (295 aa).

Positions 78, 118, 154, 188, 191, 225, 238, 240, and 270 each coordinate Zn(2+).

It belongs to the AP endonuclease 2 family. Zn(2+) is required as a cofactor.

The enzyme catalyses Endonucleolytic cleavage to 5'-phosphooligonucleotide end-products.. Endonuclease IV plays a role in DNA repair. It cleaves phosphodiester bonds at apurinic or apyrimidinic (AP) sites, generating a 3'-hydroxyl group and a 5'-terminal sugar phosphate. The sequence is that of Probable endonuclease 4 from Vibrio campbellii (strain ATCC BAA-1116).